The primary structure comprises 689 residues: uncharacterized protein (689 aa).

Composition is skewed to low complexity over residues 347 to 359 (RPPS…AGEP) and 370 to 388 (ASTA…TRPT). The segment at 347–689 (RPPSGSGEAA…KSQPPAAHTA (343 aa)) is disordered. The segment covering 405 to 480 (ARPESEEQTD…QESQVARRDE (76 aa)) has biased composition (basic and acidic residues). 2 stretches are compositionally biased toward pro residues: residues 515–539 (VPGP…PPMT) and 550–569 (RCPP…PPRP). Composition is skewed to low complexity over residues 570-581 (SSDTPLSAVSRP) and 591-610 (TARV…YSPA). A compositionally biased stretch (pro residues) spans 611-620 (PLSPPSPVSP). The segment covering 666–676 (SVPSSASPSAS) has biased composition (low complexity).

This is an uncharacterized protein from Homo sapiens (Human).